The chain runs to 363 residues: NAD(P)H-quinone oxidoreductase subunit 1, chloroplastic (363 aa).

A run of 8 helical transmembrane segments spans residues 30-50 (LVPI…IVWL), 98-118 (FSIG…VIPF), 127-147 (LSIG…GLLM), 165-185 (AAQS…ISLL), 203-223 (FWGW…ISSL), 248-268 (YSGI…LVSS), 300-320 (VFGT…FLFI), and 336-356 (LLNL…LLTT).

This sequence belongs to the complex I subunit 1 family. As to quaternary structure, NDH is composed of at least 16 different subunits, 5 of which are encoded in the nucleus.

Its subcellular location is the plastid. The protein localises to the chloroplast thylakoid membrane. It catalyses the reaction a plastoquinone + NADH + (n+1) H(+)(in) = a plastoquinol + NAD(+) + n H(+)(out). It carries out the reaction a plastoquinone + NADPH + (n+1) H(+)(in) = a plastoquinol + NADP(+) + n H(+)(out). NDH shuttles electrons from NAD(P)H:plastoquinone, via FMN and iron-sulfur (Fe-S) centers, to quinones in the photosynthetic chain and possibly in a chloroplast respiratory chain. The immediate electron acceptor for the enzyme in this species is believed to be plastoquinone. Couples the redox reaction to proton translocation, and thus conserves the redox energy in a proton gradient. The chain is NAD(P)H-quinone oxidoreductase subunit 1, chloroplastic from Solanum lycopersicum (Tomato).